An 82-amino-acid polypeptide reads, in one-letter code: Small ribosomal subunit protein bS18 (82 aa).

Belongs to the bacterial ribosomal protein bS18 family. Part of the 30S ribosomal subunit. Forms a tight heterodimer with protein bS6.

In terms of biological role, binds as a heterodimer with protein bS6 to the central domain of the 16S rRNA, where it helps stabilize the platform of the 30S subunit. In Methylobacterium nodulans (strain LMG 21967 / CNCM I-2342 / ORS 2060), this protein is Small ribosomal subunit protein bS18.